Consider the following 428-residue polypeptide: Chaperone SurA (428 aa).

The first 19 residues, 1 to 19 (MNIWKTLLLGMLVTGSAVS), serve as a signal peptide directing secretion. PpiC domains lie at 170-268 (SVEY…KIED) and 277-377 (VTEV…EVLD).

Its subcellular location is the periplasm. The enzyme catalyses [protein]-peptidylproline (omega=180) = [protein]-peptidylproline (omega=0). In terms of biological role, chaperone involved in the correct folding and assembly of outer membrane proteins. Recognizes specific patterns of aromatic residues and the orientation of their side chains, which are found more frequently in integral outer membrane proteins. May act in both early periplasmic and late outer membrane-associated steps of protein maturation. This Vibrio vulnificus (strain CMCP6) protein is Chaperone SurA.